We begin with the raw amino-acid sequence, 401 residues long: 8-amino-7-oxononanoate synthase (401 aa).

Arg-24 is a binding site for substrate. Pyridoxal 5'-phosphate is bound at residue 111 to 112 (GF). Substrate is bound at residue His-137. 3 residues coordinate pyridoxal 5'-phosphate: Ser-183, His-211, and Thr-240. Lys-243 is modified (N6-(pyridoxal phosphate)lysine). Thr-357 contacts substrate.

The protein belongs to the class-II pyridoxal-phosphate-dependent aminotransferase family. BioF subfamily. In terms of assembly, homodimer. It depends on pyridoxal 5'-phosphate as a cofactor.

It catalyses the reaction 6-carboxyhexanoyl-[ACP] + L-alanine + H(+) = (8S)-8-amino-7-oxononanoate + holo-[ACP] + CO2. It participates in cofactor biosynthesis; biotin biosynthesis. Catalyzes the decarboxylative condensation of pimeloyl-[acyl-carrier protein] and L-alanine to produce 8-amino-7-oxononanoate (AON), [acyl-carrier protein], and carbon dioxide. This chain is 8-amino-7-oxononanoate synthase, found in Xanthomonas campestris pv. campestris (strain 8004).